Consider the following 322-residue polypeptide: Malate dehydrogenase (322 aa).

Residues 10–15 and Asp-34 contribute to the NAD(+) site; that span reads GSGQIG. 2 residues coordinate substrate: Arg-83 and Arg-89. NAD(+)-binding positions include Asn-96 and 119–121; that span reads ITN. Substrate-binding residues include Asn-121 and Arg-152. The active-site Proton acceptor is the His-176.

The protein belongs to the LDH/MDH superfamily. MDH type 3 family.

The enzyme catalyses (S)-malate + NAD(+) = oxaloacetate + NADH + H(+). In terms of biological role, catalyzes the reversible oxidation of malate to oxaloacetate. The chain is Malate dehydrogenase from Nitrobacter winogradskyi (strain ATCC 25391 / DSM 10237 / CIP 104748 / NCIMB 11846 / Nb-255).